A 438-amino-acid chain; its full sequence is Transposon Ty2-F Gag polyprotein (438 aa).

3 stretches are compositionally biased toward polar residues: residues 1–11 (MESQQLHQNPH), 19–39 (ASVT…SASN), and 49–60 (KVNSQQETTPGT). Disordered stretches follow at residues 1–86 (MESQ…GQYQ), 366–397 (VSRT…AKAH), and 419–438 (SSQY…TERI). Residues 295–397 (ENNINVSDRL…SSKPRAAKAH (103 aa)) form an RNA-binding region. The segment covering 369-381 (TSPNTTNTKVTTR) has biased composition (low complexity).

In terms of assembly, homotrimer.

Its subcellular location is the cytoplasm. Its function is as follows. Capsid protein (CA) is the structural component of the virus-like particle (VLP), forming the shell that encapsulates the retrotransposons dimeric RNA genome. The particles are assembled from trimer-clustered units and there are holes in the capsid shells that allow for the diffusion of macromolecules. CA also has nucleocapsid-like chaperone activity, promoting primer tRNA(i)-Met annealing to the multipartite primer-binding site (PBS), dimerization of Ty2 RNA and initiation of reverse transcription. This chain is Transposon Ty2-F Gag polyprotein (TY2A-F), found in Saccharomyces cerevisiae (strain ATCC 204508 / S288c) (Baker's yeast).